A 2294-amino-acid polypeptide reads, in one-letter code: Protein Ycf2 (2294 aa).

1635–1642 contacts ATP; sequence GSIGTGRS.

Belongs to the Ycf2 family.

The protein resides in the plastid. It is found in the chloroplast stroma. Functionally, probable ATPase of unknown function. Its presence in a non-photosynthetic plant (Epifagus virginiana) and experiments in tobacco indicate that it has an essential function which is probably not related to photosynthesis. This chain is Protein Ycf2, found in Ranunculus macranthus (Large buttercup).